Consider the following 60-residue polypeptide: Cytotoxin 3 (60 aa).

Disulfide bonds link C3–C21, C14–C38, C42–C53, and C54–C59.

It belongs to the three-finger toxin family. Short-chain subfamily. Type IA cytotoxin sub-subfamily. As to quaternary structure, monomer in solution; Homodimer and oligomer in the presence of negatively charged lipids forming a pore with a size ranging between 20 and 30 Angstroms. Expressed by the venom gland.

The protein localises to the secreted. Its subcellular location is the target cell membrane. In terms of biological role, shows cytolytic activity on many different cells by forming pore in lipid membranes. In vivo, increases heart rate or kills the animal by cardiac arrest. In addition, it binds to heparin with high affinity, interacts with Kv channel-interacting protein 1 (KCNIP1) in a calcium-independent manner, and binds to integrin alpha-V/beta-3 (ITGAV/ITGB3) with moderate affinity. This chain is Cytotoxin 3, found in Naja naja (Indian cobra).